The sequence spans 134 residues: Small ribosomal subunit protein bS6 (134 aa).

A compositionally biased stretch (basic and acidic residues) spans 113–122; the sequence is NRDIKEKEQP. The interval 113 to 134 is disordered; sequence NRDIKEKEQPSESNVDADLKVN.

This sequence belongs to the bacterial ribosomal protein bS6 family.

In terms of biological role, binds together with bS18 to 16S ribosomal RNA. This is Small ribosomal subunit protein bS6 from Borrelia duttonii (strain Ly).